A 90-amino-acid polypeptide reads, in one-letter code: Putative septation protein SpoVG (90 aa).

This sequence belongs to the SpoVG family.

Its function is as follows. Could be involved in septation. The chain is Putative septation protein SpoVG from Clostridium perfringens (strain ATCC 13124 / DSM 756 / JCM 1290 / NCIMB 6125 / NCTC 8237 / Type A).